A 342-amino-acid chain; its full sequence is Ferredoxin--NADP reductase (342 aa).

Positions 17, 36, 44, 49, 89, 124, 289, and 330 each coordinate FAD.

The protein belongs to the ferredoxin--NADP reductase type 2 family. As to quaternary structure, homodimer. Requires FAD as cofactor.

It carries out the reaction 2 reduced [2Fe-2S]-[ferredoxin] + NADP(+) + H(+) = 2 oxidized [2Fe-2S]-[ferredoxin] + NADPH. This chain is Ferredoxin--NADP reductase, found in Bradyrhizobium diazoefficiens (strain JCM 10833 / BCRC 13528 / IAM 13628 / NBRC 14792 / USDA 110).